We begin with the raw amino-acid sequence, 179 residues long: MSRTKSVQDYIRTIVDFPHEGILFRDVTTLFADPRGFRIAIDQMLHPYAGERIDKVVGLEARGFILGGAIAHQLSVGFVPIRKKGKLPGTTISQDYKLEYGEAIVEIHDDAIQPGEKILLVDDLLATGGTAAAGIKLVERLGGEIVSCAFIIDLPDLGGRKVLESMGMDVHALCAFDGL.

It belongs to the purine/pyrimidine phosphoribosyltransferase family. Homodimer.

The protein localises to the cytoplasm. The catalysed reaction is AMP + diphosphate = 5-phospho-alpha-D-ribose 1-diphosphate + adenine. The protein operates within purine metabolism; AMP biosynthesis via salvage pathway; AMP from adenine: step 1/1. Its function is as follows. Catalyzes a salvage reaction resulting in the formation of AMP, that is energically less costly than de novo synthesis. In Ruegeria pomeroyi (strain ATCC 700808 / DSM 15171 / DSS-3) (Silicibacter pomeroyi), this protein is Adenine phosphoribosyltransferase.